A 201-amino-acid chain; its full sequence is Glutathione peroxidase 1 (201 aa).

Serine 7 and serine 32 each carry phosphoserine. Selenocysteine 47 is an active-site residue. A non-standard amino acid (selenocysteine) is located at residue selenocysteine 47. 3 positions are modified to N6-acetyllysine; alternate: lysine 62, lysine 86, and lysine 112. N6-succinyllysine; alternate occurs at positions 62, 86, and 112. Position 119 is an N6-acetyllysine (lysine 119). Lysine 146 bears the N6-acetyllysine; alternate mark. Position 146 is an N6-succinyllysine; alternate (lysine 146). The residue at position 195 (serine 195) is a Phosphoserine.

It belongs to the glutathione peroxidase family. As to quaternary structure, homotetramer. Interacts with MIEN1. Post-translationally, during periods of oxidative stress, Sec-47 may react with a superoxide radical, irreversibly lose hydroselenide and be converted to dehydroalanine. In terms of tissue distribution, expressed in liver, kidney, lung, brain and heart.

The protein localises to the cytoplasm. It is found in the mitochondrion. The catalysed reaction is 2 glutathione + H2O2 = glutathione disulfide + 2 H2O. It catalyses the reaction a hydroperoxy polyunsaturated fatty acid + 2 glutathione = a hydroxy polyunsaturated fatty acid + glutathione disulfide + H2O. The enzyme catalyses tert-butyl hydroperoxide + 2 glutathione = tert-butanol + glutathione disulfide + H2O. It carries out the reaction cumene hydroperoxide + 2 glutathione = 2-phenylpropan-2-ol + glutathione disulfide + H2O. The catalysed reaction is (13S)-hydroperoxy-(9Z,11E)-octadecadienoate + 2 glutathione = (13S)-hydroxy-(9Z,11E)-octadecadienoate + glutathione disulfide + H2O. It catalyses the reaction (9S)-hydroperoxy-(10E,12Z)-octadecadienoate + 2 glutathione = (9S)-hydroxy-(10E,12Z)-octadecadienoate + glutathione disulfide + H2O. The enzyme catalyses (5S)-hydroperoxy-(6E,8Z,11Z,14Z)-eicosatetraenoate + 2 glutathione = (5S)-hydroxy-(6E,8Z,11Z,14Z)-eicosatetraenoate + glutathione disulfide + H2O. It carries out the reaction (12S)-hydroperoxy-(5Z,8Z,10E,14Z)-eicosatetraenoate + 2 glutathione = (12S)-hydroxy-(5Z,8Z,10E,14Z)-eicosatetraenoate + glutathione disulfide + H2O. The catalysed reaction is (12R)-hydroperoxy-(5Z,8Z,10E,14Z)-eicosatetraenoate + 2 glutathione = (12R)-hydroxy-(5Z,8Z,10E,14Z)-eicosatetraenoate + glutathione disulfide + H2O. It catalyses the reaction (15S)-hydroperoxy-(5Z,8Z,11Z,13E)-eicosatetraenoate + 2 glutathione = (15S)-hydroxy-(5Z,8Z,11Z,13E)-eicosatetraenoate + glutathione disulfide + H2O. The enzyme catalyses (5S)-hydroperoxy-(6E,8Z,11Z,14Z,17Z)-eicosapentaenoate + 2 glutathione = (5S)-hydroxy-(6E,8Z,11Z,14Z,17Z)-eicosapentaenoate + glutathione disulfide + H2O. It carries out the reaction (12S)-hydroperoxy-(5Z,8Z,10E,14Z,17Z)-eicosapentaenoate + 2 glutathione = (12S)-hydroxy-(5Z,8Z,10E,14Z,17Z)-eicosapentaenoate + glutathione disulfide + H2O. The catalysed reaction is (15S)-hydroperoxy-(5Z,8Z,11Z,13E,17Z)-eicosapentaenoate + 2 glutathione = (15S)-hydroxy-(5Z,8Z,11Z,13E,17Z)-eicosapentaenoate + glutathione disulfide + H2O. It catalyses the reaction (15S)-hydroperoxy-(11Z,13E)-eicosadienoate + 2 glutathione = (15S)-hydroxy-(11Z,13E)-eicosadienoate + glutathione disulfide + H2O. The enzyme catalyses (17S)-hydroperoxy-(4Z,7Z,10Z,13Z,15E,19Z)-docosahexaenoate + 2 glutathione = (17S)-hydroxy-(4Z,7Z,10Z,13Z,15E,19Z)-docosahexaenoate + glutathione disulfide + H2O. Functionally, catalyzes the reduction of hydroperoxides in a glutathione-dependent manner thus regulating cellular redox homeostasis. Can reduce small soluble hydroperoxides such as H2O2, cumene hydroperoxide and tert-butyl hydroperoxide, as well as several fatty acid-derived hydroperoxides. In platelets catalyzes the reduction of 12-hydroperoxyeicosatetraenoic acid, the primary product of the arachidonate 12-lipoxygenase pathway. The polypeptide is Glutathione peroxidase 1 (Mus musculus (Mouse)).